A 237-amino-acid polypeptide reads, in one-letter code: Uridylate kinase (237 aa).

Lysine 12–glycine 15 is a binding site for ATP. The interval glycine 20–glycine 25 is involved in allosteric activation by GTP. Glycine 54 lines the UMP pocket. ATP is bound by residues glycine 55 and arginine 59. UMP-binding positions include aspartate 74 and threonine 135 to threonine 142. ATP contacts are provided by threonine 162, tyrosine 168, and aspartate 171.

This sequence belongs to the UMP kinase family. Homohexamer.

It localises to the cytoplasm. It catalyses the reaction UMP + ATP = UDP + ADP. It participates in pyrimidine metabolism; CTP biosynthesis via de novo pathway; UDP from UMP (UMPK route): step 1/1. With respect to regulation, allosterically activated by GTP. Inhibited by UTP. Its function is as follows. Catalyzes the reversible phosphorylation of UMP to UDP. The protein is Uridylate kinase (pyrH) of Haemophilus influenzae (strain ATCC 51907 / DSM 11121 / KW20 / Rd).